The chain runs to 87 residues: uncharacterized protein (87 aa).

The next 2 membrane-spanning stretches (helical) occupy residues 8–28 (IVVL…IFDL) and 47–67 (LAGS…LIGL).

It localises to the cell membrane. This is an uncharacterized protein from Bacillus subtilis (strain 168).